Here is a 355-residue protein sequence, read N- to C-terminus: Protein beta (355 aa).

In terms of biological role, the presence of this protein prevents gop protein from killing E.coli. The protein is Protein beta (Beta) of Escherichia coli (Bacteriophage P4).